Reading from the N-terminus, the 2080-residue chain is MLRVFILYAENVHTPDTDISDAYCSAVFAGVKKRTKVIKNSVNPVWNEGFEWDLKGIPLDQGSELHVVVKDHETMGRNRFLGEAKVPLREVLATPSLSASFNAPLLDTKKQPTGASLVLQVSYTPLPGAVPLFPPPTPLEPSPTLPDLDVVADTGGEEDTEDQGLTGDEAEPFLDQSGGPGAPTTPRKLPSRPPPHYPGIKRKRSAPTSRKLLSDKPQDFQIRVQVIEGRQLPGVNIKPVVKVTAAGQTKRTRIHKGNSPLFNETLFFNLFDSPGELFDEPIFITVVDSRSLRTDALLGEFRMDVGTIYREPRHAYLRKWLLLSDPDDFSAGARGYLKTSLCVLGPGDEAPLERKDPSEDKEDIESNLLRPTGVALRGAHFCLKVFRAEDLPQMDDAVMDNVKQIFGFESNKKNLVDPFVEVSFAGKMLCSKILEKTANPQWNQNITLPAMFPSMCEKMRIRIIDWDRLTHNDIVATTYLSMSKISAPGGEIEEEPAGAVKPSKASDLDDYLGFLPTFGPCYINLYGSPREFTGFPDPYTELNTGKGEGVAYRGRLLLSLETKLVEHSEQKVEDLPADDILRVEKYLRRRKYSLFAAFYSATMLQDVDDAIQFEVSIGNYGNKFDMTCLPLASTTQYSRAVFDGCHYYYLPWGNVKPVVVLSSYWEDISHRIETQNQLLGIADRLEAGLEQVHLALKAQCSTEDVDSLVAQLTDELIAGCSQPLGDIHETPSATHLDQYLYQLRTHHLSQITEAALALKLGHSELPAALEQAEDWLLRLRALAEEPQNSLPDIVIWMLQGDKRVAYQRVPAHQVLFSRRGANYCGKNCGKLQTIFLKYPMEKVPGARMPVQIRVKLWFGLSVDEKEFNQFAEGKLSVFAETYENETKLALVGNWGTTGLTYPKFSDVTGKIKLPKDSFRPSAGWTWAGDWFVCPEKTLLHDMDAGHLSFVEEVFENQTRLPGGQWIYMSDNYTDVNGEKVLPKDDIECPLGWKWEDEEWSTDLNRAVDEQGWEYSITIPPERKPKHWVPAEKMYYTHRRRRWVRLRRRDLSQMEALKRHRQAEAEGEGWEYASLFGWKFHLEYRKTDAFRRRRWRRRMEPLEKTGPAAVFALEGALGGVMDDKSEDSMSVSTLSFGVNRPTISCIFDYGNRYHLRCYMYQARDLAAMDKDSFSDPYAIVSFLHQSQKTVVVKNTLNPTWDQTLIFYEIEIFGEPATVAEQPPSIVVELYDHDTYGADEFMGRCICQPSLERMPRLAWFPLTRGSQPSGELLASFELIQREKPAIHHIPGFEVQETSRILDESEDTDLPYPPPQREANIYMVPQNIKPALQRTAIEILAWGLRNMKSYQLANISSPSLVVECGGQTVQSCVIRNLRKNPNFDICTLFMEVMLPREELYCPPITVKVIDNRQFGRRPVVGQCTIRSLESFLCDPYSAESPSPQGGPDDVSLLSPGEDVLIDIDDKEPLIPIQEEEFIDWWSKFFASIGEREKCGSYLEKDFDTLKVYDTQLENVEAFEGLSDFCNTFKLYRGKTQEETEDPSVIGEFKGLFKIYPLPEDPAIPMPPRQFHQLAAQGPQECLVRIYIVRAFGLQPKDPNGKCDPYIKISIGKKSVSDQDNYIPCTLEPVFGKMFELTCTLPLEKDLKITLYDYDLLSKDEKIGETVVDLENRLLSKFGARCGLPQTYCVSGPNQWRDQLRPSQLLHLFCQQHRVKAPVYRTDRVMFQDKEYSIEEIEAGRIPNPHLGPVEERLALHVLQQQGLVPEHVESRPLYSPLQPDIEQGKLQMWVDLFPKALGRPGPPFNITPRRARRFFLRCIIWNTRDVILDDLSLTGEKMSDIYVKGWMIGFEEHKQKTDVHYRSLGGEGNFNWRFIFPFDYLPAEQVCTIAKKDAFWRLDKTESKIPARVVFQIWDNDKFSFDDFLGSLQLDLNRMPKPAKTAKKCSLDQLDDAFHPEWFVSLFEQKTVKGWWPCVAEEGEKKILAGKLEMTLEIVAESEHEERPAGQGRDEPNMNPKLEDPRRPDTSFLWFTSPYKTMKFILWRRFRWAIILFIILFILLLFLAIFIYAFPNYAAMKLVKPFS.

In terms of domain architecture, C2 1 spans 1–101; that stretch reads MLRVFILYAE…LATPSLSASF (101 aa). The Cytoplasmic portion of the chain corresponds to 1-2046; the sequence is MLRVFILYAE…FILWRRFRWA (2046 aa). Residues Asp18, Ile19, Asp21, and Asn40 each contribute to the Ca(2+) site. Over residues 132–144 the composition is skewed to pro residues; that stretch reads LFPPPTPLEPSPT. The interval 132-215 is disordered; that stretch reads LFPPPTPLEP…APTSRKLLSD (84 aa). Positions 155–172 are enriched in acidic residues; it reads GGEEDTEDQGLTGDEAEP. At Thr166 the chain carries Phosphothreonine. Phosphoserine is present on residues Thr166 and Gly167. Residues Tyr197 and Pro198 each carry the phosphothreonine modification. 6 C2 domains span residues 203–321, 360–496, 1136–1262, 1310–1438, 1561–1679, and 1795–1943; these read KRSA…RKWL, DKED…EEEP, GVNR…PLTR, PPPQ…AESP, PMPP…ARCG, and GRPG…KKCS. Residues Asp1168, Asp1174, Asp1230, and Asp1232 each contribute to the Ca(2+) site. Asp1594, Asp1600, Asp1649, Asp1651, Asp1914, Ser1917, and Asp1920 together coordinate Ca(2+). Residues 1995 to 2017 form a disordered region; sequence SEHEERPAGQGRDEPNMNPKLED. Residues 2047–2067 form a helical membrane-spanning segment; that stretch reads IILFIILFILLLFLAIFIYAF. Residues 2068–2080 lie on the Extracellular side of the membrane; the sequence is PNYAAMKLVKPFS.

This sequence belongs to the ferlin family. In terms of assembly, interacts with CACNA1S. Interacts with ANXA1; the interaction is Ca(2+)- and injury state-dependent. Interacts with ANXA2; the interaction is Ca(2+)- and injury state-dependent. Interacts with CACNA1S and PARVB. Interacts with TRIM72/MG53; interaction is required for transport to sites of cell injury during repair patch formation. Interacts with RIPOR2; this interaction occurs during early myogenic differentiation. Interacts with CAV3 and PARVB. Interacts with AHNAK; the interaction is direct and Ca(2+)-independent. Interacts with AHNAK2; the interaction is direct and Ca(2+)-independent. Ca(2+) is required as a cofactor. Expressed in skeletal muscle, myoblast, myotube and in the syncytiotrophoblast (STB) of the placenta (at protein level). Ubiquitous. Highly expressed in skeletal muscle. Also found in heart, brain, spleen, intestine, placenta and at lower levels in liver, lung, kidney and pancreas.

The protein localises to the cell membrane. The protein resides in the sarcolemma. Its subcellular location is the cytoplasmic vesicle membrane. Key calcium ion sensor involved in the Ca(2+)-triggered synaptic vesicle-plasma membrane fusion. Plays a role in the sarcolemma repair mechanism of both skeletal muscle and cardiomyocytes that permits rapid resealing of membranes disrupted by mechanical stress. This chain is Dysferlin (DYSF), found in Homo sapiens (Human).